The primary structure comprises 270 residues: Tryptophan synthase alpha chain (270 aa).

Catalysis depends on proton acceptor residues E57 and D68.

The protein belongs to the TrpA family. In terms of assembly, tetramer of two alpha and two beta chains.

The catalysed reaction is (1S,2R)-1-C-(indol-3-yl)glycerol 3-phosphate + L-serine = D-glyceraldehyde 3-phosphate + L-tryptophan + H2O. It participates in amino-acid biosynthesis; L-tryptophan biosynthesis; L-tryptophan from chorismate: step 5/5. The alpha subunit is responsible for the aldol cleavage of indoleglycerol phosphate to indole and glyceraldehyde 3-phosphate. The protein is Tryptophan synthase alpha chain of Mycobacterium bovis (strain ATCC BAA-935 / AF2122/97).